The sequence spans 320 residues: Cytochrome f (320 aa).

An N-terminal signal peptide occupies residues 1-35 (MQTRKTLSWIKEEITRSISVSLMIYIITGAYISNA). Heme is bound by residues Tyr36, Cys56, Cys59, and His60. The helical transmembrane segment at 286-306 (VQGLLFFLASVILAQIFLVLK) threads the bilayer.

The protein belongs to the cytochrome f family. In terms of assembly, the 4 large subunits of the cytochrome b6-f complex are cytochrome b6, subunit IV (17 kDa polypeptide, petD), cytochrome f and the Rieske protein, while the 4 small subunits are PetG, PetL, PetM and PetN. The complex functions as a dimer. The cofactor is heme.

The protein localises to the plastid. The protein resides in the chloroplast thylakoid membrane. Functionally, component of the cytochrome b6-f complex, which mediates electron transfer between photosystem II (PSII) and photosystem I (PSI), cyclic electron flow around PSI, and state transitions. This Populus alba (White poplar) protein is Cytochrome f.